A 434-amino-acid chain; its full sequence is Nicotinate phosphoribosyltransferase (434 aa).

H242 bears the Phosphohistidine; by autocatalysis mark.

Belongs to the NAPRTase family. In terms of processing, transiently phosphorylated on a His residue during the reaction cycle. Phosphorylation strongly increases the affinity for substrates and increases the rate of nicotinate D-ribonucleotide production. Dephosphorylation regenerates the low-affinity form of the enzyme, leading to product release.

It catalyses the reaction nicotinate + 5-phospho-alpha-D-ribose 1-diphosphate + ATP + H2O = nicotinate beta-D-ribonucleotide + ADP + phosphate + diphosphate. It participates in cofactor biosynthesis; NAD(+) biosynthesis; nicotinate D-ribonucleotide from nicotinate: step 1/1. Its function is as follows. Catalyzes the synthesis of beta-nicotinate D-ribonucleotide from nicotinate and 5-phospho-D-ribose 1-phosphate at the expense of ATP. The sequence is that of Nicotinate phosphoribosyltransferase from Sinorhizobium fredii (strain NBRC 101917 / NGR234).